Here is a 605-residue protein sequence, read N- to C-terminus: Poly [ADP-ribose] polymerase 2-B (605 aa).

The segment at 96–122 (NAAAAAAVTDGGDQDKTKSAKDDDGDD) is disordered. Residues 108 to 122 (DQDKTKSAKDDDGDD) show a composition bias toward basic and acidic residues. Positions 153 to 260 (AYHVLQVGDE…TKLETRTASF (108 aa)) constitute a WGR domain. One can recognise a PARP alpha-helical domain in the interval 250 to 370 (ETKLETRTAS…EIEIAIKLLE (121 aa)). The 228-residue stretch at 378-605 (HPLYARYKQF…NVNFNFKRWG (228 aa)) folds into the PARP catalytic domain.

It belongs to the ARTD/PARP family.

Its subcellular location is the nucleus. It catalyses the reaction NAD(+) + (ADP-D-ribosyl)n-acceptor = nicotinamide + (ADP-D-ribosyl)n+1-acceptor + H(+).. The enzyme catalyses L-aspartyl-[protein] + NAD(+) = 4-O-(ADP-D-ribosyl)-L-aspartyl-[protein] + nicotinamide. The catalysed reaction is L-glutamyl-[protein] + NAD(+) = 5-O-(ADP-D-ribosyl)-L-glutamyl-[protein] + nicotinamide. Functionally, involved in the base excision repair (BER) pathway, by catalyzing the poly(ADP-ribosyl)ation of a limited number of acceptor proteins involved in chromatin architecture and in DNA metabolism. This modification follows DNA damages and appears as an obligatory step in a detection/signaling pathway leading to the reparation of DNA strand breaks. The chain is Poly [ADP-ribose] polymerase 2-B (PARP2-B) from Oryza sativa subsp. japonica (Rice).